Consider the following 514-residue polypeptide: Serine--tRNA ligase, cytoplasmic (514 aa).

N-acetylmethionine is present on Met-1. Positions 9-61 (RVDKGGDPALIRETQEKRFKDPGLVDQLVKADSEWRRCRFRADNLNKLKNLCS) are interaction with tRNA. Residue Ser-241 is modified to Phosphoserine. Residues Thr-271 and Arg-302 each contribute to the L-serine site. Residues 302 to 304 (RQE) and 318 to 321 (VHQF) each bind ATP. At Lys-323 the chain carries N6-acetyllysine. Residue Glu-325 participates in L-serine binding. 391 to 394 (ELVS) serves as a coordination point for ATP. Asn-427 serves as a coordination point for L-serine. The tract at residues 471 to 514 (VKPAPIDQEPSKKQKKQHEGSKKKAAARDVALESRLQNMEVTDA) is disordered. Over residues 479–502 (EPSKKQKKQHEGSKKKAAARDVAL) the composition is skewed to basic and acidic residues. The short motif at 482–494 (KKQKKQHEGSKKK) is the Nuclear localization signal element. The span at 505–514 (RLQNMEVTDA) shows a compositional bias: polar residues.

Belongs to the class-II aminoacyl-tRNA synthetase family. Type-1 seryl-tRNA synthetase subfamily. In terms of assembly, homodimer. The tRNA molecule may bind across the dimer. Interacts with SIRT2. Interacts with METTL6; interaction is required for the tRNA N(3)-methylcytidine methyltransferase activity of METTL6.

It localises to the cytoplasm. Its subcellular location is the nucleus. The enzyme catalyses tRNA(Ser) + L-serine + ATP = L-seryl-tRNA(Ser) + AMP + diphosphate + H(+). It catalyses the reaction tRNA(Sec) + L-serine + ATP = L-seryl-tRNA(Sec) + AMP + diphosphate + H(+). Its pathway is aminoacyl-tRNA biosynthesis; selenocysteinyl-tRNA(Sec) biosynthesis; L-seryl-tRNA(Sec) from L-serine and tRNA(Sec): step 1/1. In terms of biological role, catalyzes the attachment of serine to tRNA(Ser) in a two-step reaction: serine is first activated by ATP to form Ser-AMP and then transferred to the acceptor end of tRNA(Ser). Is probably also able to aminoacylate tRNA(Sec) with serine, to form the misacylated tRNA L-seryl-tRNA(Sec), which will be further converted into selenocysteinyl-tRNA(Sec). In the nucleus, binds to the VEGFA core promoter and prevents MYC binding and transcriptional activation by MYC. Recruits SIRT2 to the VEGFA promoter, promoting deacetylation of histone H4 at 'Lys-16' (H4K16). Thereby, inhibits the production of VEGFA and sprouting angiogenesis mediated by VEGFA. The protein is Serine--tRNA ligase, cytoplasmic (SARS1) of Macaca fascicularis (Crab-eating macaque).